Here is a 164-residue protein sequence, read N- to C-terminus: Phosphopantetheine adenylyltransferase (164 aa).

Position 9 (Ser9) interacts with substrate. Residues 9 to 10 and His17 contribute to the ATP site; that span reads SF. Positions 41, 78, and 92 each coordinate substrate. ATP-binding positions include 93–95, Glu103, and 128–134; these read GLR and SRPITAT.

The protein belongs to the bacterial CoaD family. In terms of assembly, homohexamer. It depends on Mg(2+) as a cofactor.

The protein resides in the cytoplasm. It catalyses the reaction (R)-4'-phosphopantetheine + ATP + H(+) = 3'-dephospho-CoA + diphosphate. The protein operates within cofactor biosynthesis; coenzyme A biosynthesis; CoA from (R)-pantothenate: step 4/5. Reversibly transfers an adenylyl group from ATP to 4'-phosphopantetheine, yielding dephospho-CoA (dPCoA) and pyrophosphate. This is Phosphopantetheine adenylyltransferase from Agrobacterium fabrum (strain C58 / ATCC 33970) (Agrobacterium tumefaciens (strain C58)).